The primary structure comprises 500 residues: Cytochrome P450 monooxygenase ausR (500 aa).

The helical transmembrane segment at 15–35 (GVGLYILWTVAVLFVIFKLLA) threads the bilayer. Cysteine 439 serves as a coordination point for heme.

The protein belongs to the cytochrome P450 family. It depends on heme as a cofactor.

It is found in the membrane. The protein operates within secondary metabolite biosynthesis; terpenoid biosynthesis. In terms of biological role, cytochrome P450 monooxygenase; part of the gene cluster that mediates the biosynthesis of calidodehydroaustin, a fungal meroterpenoid. The first step of the pathway is the synthesis of 3,5-dimethylorsellinic acid by the polyketide synthase ausA. 3,5-dimethylorsellinic acid is then prenylated by the polyprenyl transferase ausN. Further epoxidation by the FAD-dependent monooxygenase ausM and cyclization by the probable terpene cyclase ausL lead to the formation of protoaustinoid A. Protoaustinoid A is then oxidized to spiro-lactone preaustinoid A3 by the combined action of the FAD-binding monooxygenases ausB and ausC, and the dioxygenase ausE. Acid-catalyzed keto-rearrangement and ring contraction of the tetraketide portion of preaustinoid A3 by ausJ lead to the formation of preaustinoid A4. The aldo-keto reductase ausK, with the help of ausH, is involved in the next step by transforming preaustinoid A4 into isoaustinone which is in turn hydroxylated by the P450 monooxygenase ausI to form austinolide. The cytochrome P450 monooxygenase ausG modifies austinolide to austinol. Austinol is further acetylated to austin by the O-acetyltransferase ausP, which spontaneously changes to dehydroaustin. The cytochrome P450 monooxygenase ausR then converts dehydroaustin is into 7-dehydrodehydroaustin. The hydroxylation catalyzed by ausR permits the O-acetyltransferase ausQ to add an additional acetyl group to the molecule, leading to the formation of acetoxydehydroaustin. The short chain dehydrogenase ausT catalyzes the reduction of the double bond present between carbon atoms 1 and 2 to convert 7-dehydrodehydroaustin into 1,2-dihydro-7-hydroxydehydroaustin. AusQ catalyzes not only an acetylation reaction but also the addition of the PKS ausV diketide product to 1,2-dihydro-7-hydroxydehydroaustin, forming precalidodehydroaustin. Finally, the iron/alpha-ketoglutarate-dependent dioxygenase converts precalidodehydroaustin into calidodehydroaustin. The protein is Cytochrome P450 monooxygenase ausR of Aspergillus calidoustus.